The following is a 65-amino-acid chain: Small, acid-soluble spore protein H 1 (65 aa).

The protein belongs to the SspH family.

The protein resides in the spore core. In Clostridium botulinum (strain Langeland / NCTC 10281 / Type F), this protein is Small, acid-soluble spore protein H 1.